The sequence spans 164 residues: S-ribosylhomocysteine lyase (164 aa).

Residues His-61, His-65, and Cys-131 each contribute to the Fe cation site.

Belongs to the LuxS family. In terms of assembly, homodimer. It depends on Fe cation as a cofactor.

It carries out the reaction S-(5-deoxy-D-ribos-5-yl)-L-homocysteine = (S)-4,5-dihydroxypentane-2,3-dione + L-homocysteine. Its function is as follows. Involved in the synthesis of autoinducer 2 (AI-2) which is secreted by bacteria and is used to communicate both the cell density and the metabolic potential of the environment. The regulation of gene expression in response to changes in cell density is called quorum sensing. Catalyzes the transformation of S-ribosylhomocysteine (RHC) to homocysteine (HC) and 4,5-dihydroxy-2,3-pentadione (DPD). In Bifidobacterium longum (strain DJO10A), this protein is S-ribosylhomocysteine lyase.